Consider the following 336-residue polypeptide: Serpentine receptor class gamma-9 (336 aa).

Transmembrane regions (helical) follow at residues 30–50, 64–84, 111–131, 152–172, 200–220, 237–257, and 271–291; these read LLQAAYMVPPAFLYARILYVI, FVIYSMDSIVGFILLLLDIFI, IYYPLLNYLHCAQPLIQIFLT, LSFIVAFVSLSPFLIIWNTII, FLFLVRSVAVIITVASTVIMF, LCLACVIHSICFMVPSFFEAL, and FLIQPFAWDVLNVGSPLIMIF.

It belongs to the nematode receptor-like protein srg family.

It is found in the membrane. In Caenorhabditis elegans, this protein is Serpentine receptor class gamma-9 (srg-9).